We begin with the raw amino-acid sequence, 363 residues long: Histidinol-phosphate aminotransferase (363 aa).

Position 226 is an N6-(pyridoxal phosphate)lysine (lysine 226).

It belongs to the class-II pyridoxal-phosphate-dependent aminotransferase family. Histidinol-phosphate aminotransferase subfamily. In terms of assembly, homodimer. Pyridoxal 5'-phosphate is required as a cofactor.

It carries out the reaction L-histidinol phosphate + 2-oxoglutarate = 3-(imidazol-4-yl)-2-oxopropyl phosphate + L-glutamate. Its pathway is amino-acid biosynthesis; L-histidine biosynthesis; L-histidine from 5-phospho-alpha-D-ribose 1-diphosphate: step 7/9. The protein is Histidinol-phosphate aminotransferase of Campylobacter lari (strain RM2100 / D67 / ATCC BAA-1060).